Reading from the N-terminus, the 359-residue chain is Uracil-DNA glycosylase (359 aa).

Residues 1–21 (MWCMRRLPTNSVMTVARKRKQ) constitute a mitochondrion transit peptide. Asp162 (proton acceptor) is an active-site residue.

It belongs to the uracil-DNA glycosylase (UDG) superfamily. UNG family.

It is found in the mitochondrion. The protein localises to the nucleus. The enzyme catalyses Hydrolyzes single-stranded DNA or mismatched double-stranded DNA and polynucleotides, releasing free uracil.. Functionally, excises uracil residues from the DNA which can arise as a result of misincorporation of dUMP residues by DNA polymerase or due to deamination of cytosine. Not involved in strand-directed mismatch repair. The protein is Uracil-DNA glycosylase of Saccharomyces cerevisiae (strain ATCC 204508 / S288c) (Baker's yeast).